Reading from the N-terminus, the 362-residue chain is uncharacterized protein (362 aa).

It belongs to the carbohydrate kinase PfkB family.

This is an uncharacterized protein from Escherichia coli (strain K12).